A 693-amino-acid chain; its full sequence is UvrABC system protein C (693 aa).

A GIY-YIG domain is found at 16–95 (DAPGVYRFRD…IKEFDPRFNV (80 aa)). One can recognise a UVR domain in the interval 208 to 243 (GVFLRRLESEMAAASAELDFERAARVRDDINALRRV). Positions 656 to 693 (APSPDDATTEPGAVGEPGTADGAAADPDGRDAVVVPEG) are disordered. Residues 672 to 693 (PGTADGAAADPDGRDAVVVPEG) show a composition bias toward low complexity.

It belongs to the UvrC family. Interacts with UvrB in an incision complex.

The protein localises to the cytoplasm. Functionally, the UvrABC repair system catalyzes the recognition and processing of DNA lesions. UvrC both incises the 5' and 3' sides of the lesion. The N-terminal half is responsible for the 3' incision and the C-terminal half is responsible for the 5' incision. The protein is UvrABC system protein C of Beutenbergia cavernae (strain ATCC BAA-8 / DSM 12333 / CCUG 43141 / JCM 11478 / NBRC 16432 / NCIMB 13614 / HKI 0122).